The following is a 626-amino-acid chain: Serine/threonine-protein kinase PknH (626 aa).

Over 1–403 (MSDAQDSRVG…QTPRKTNPWP (403 aa)) the chain is Cytoplasmic. In terms of domain architecture, Protein kinase spans 16-276 (YHLKRLLGRG…DLALAAHEAL (261 aa)). ATP is bound by residues 22 to 30 (LGRGGMGEV) and K45. D139 (proton acceptor) is an active-site residue. T170 is subject to Phosphothreonine. The segment at 292–396 (QESTLPAPPK…GGPSPWAQTP (105 aa)) is disordered. 2 stretches are compositionally biased toward pro residues: residues 297-308 (PAPPKPVPPPTM) and 316-342 (RQPP…PAQP). Residues 343 to 355 (GPAGQRPGPTGQP) are compositionally biased toward low complexity. A helical membrane pass occupies residues 404-424 (LVAGAAAVVLVLVLGAIGIWI). At 425 to 626 (AIRPKPVQPP…AKIVDKVNKE (202 aa)) the chain is on the extracellular side. Disulfide bonds link C482-C545 and C587-C604.

Belongs to the protein kinase superfamily. Ser/Thr protein kinase family. It depends on a divalent metal cation as a cofactor. In terms of processing, autophosphorylated on threonine and serine residues. Dephosphorylated by PstP.

The protein resides in the cell membrane. It carries out the reaction L-seryl-[protein] + ATP = O-phospho-L-seryl-[protein] + ADP + H(+). The enzyme catalyses L-threonyl-[protein] + ATP = O-phospho-L-threonyl-[protein] + ADP + H(+). Its activity is regulated as follows. Inhibited by the kinase inhibitors staurosporine and H-7. In terms of biological role, may regulate bacterial growth in response to external signals to facilitate adaptation to the host environment. In vitro, phosphorylates several substrates such as EmbR, DevR (DosR), DacB1 and Rv0681. The polypeptide is Serine/threonine-protein kinase PknH (pknH) (Mycobacterium tuberculosis (strain ATCC 25618 / H37Rv)).